Reading from the N-terminus, the 413-residue chain is NADPH dehydrogenase afvA (413 aa).

53–56 contacts FMN; sequence APLC. Tyr-58 serves as a coordination point for substrate. The FMN site is built by Ala-88 and Gln-130. Position 211 to 214 (211 to 214) interacts with substrate; it reads HAAH. FMN is bound by residues Arg-264 and 370 to 371; that span reads GR.

Belongs to the NADH:flavin oxidoreductase/NADH oxidase family. NamA subfamily. It depends on FMN as a cofactor.

It carries out the reaction A + NADPH + H(+) = AH2 + NADP(+). The protein operates within secondary metabolite biosynthesis. Functionally, NADPH dehydrogenase; part of the gene cluster that mediates the biosynthesis of aflavarin, a bicoumarin that exhibits anti-insectan activity against the fungivorous beetle C.hemipterus. The chain is NADPH dehydrogenase afvA from Aspergillus flavus (strain ATCC 200026 / FGSC A1120 / IAM 13836 / NRRL 3357 / JCM 12722 / SRRC 167).